We begin with the raw amino-acid sequence, 1296 residues long: MEILRGSPALSAFRITKLLSRCQDAHLPVSDIYAEYVHFADVSAPLSADEHARLQRLLQYGPSLPEHPPAGRLLLVTPRPGTISPWSSKATDIAHNCGLSQILRLERGLAFSIQGPDLNESQWKQLAALLHDRMMEAVFTDLQQAEQLFSHHQPAPVQRVDILGQGRSALEQANIKLGLALAQDEIDYLLTAFTGLGRNPTDIELYMFAQANSEHCRHKIFNADWVIDGVVQPKTLFKMIKNTFEHTPDYVLSAYKDNAAVMEGSQVGRFYATAEKGIYDYHQEEAHILMKVETHNHPTAISPWPGAATGSGGEIRDEGATGRGAKPKAGLVGFSVSNLRIPGFEQPWEENFGKPDRIVTALDIMTEGPLGGAAFNNEFGRPALLGYFRTYEERVNSHNGIELRGYHKPIMLAGGLGNIRADHVQKGEITVGAKLVVLGGPSMNIGLGGGAASSMASGQSDADLDFASVQRDNPEMERRCQEVIDRCWQLGEYNPILFIHDVGAGGLSNAMPELVNDGGRGGRFELRDILNDEPGMSPLEVWCNESQERYVLAVAPAQMALFDEICRRERAPYAVIGEATEEKHLLLNDRHFGNQPIDMPLDVLLGKTPKMLRDVTRLQAKGDALQRADISLAEAVKRIMHLPAVAEKTFLITIGDRTVTGMVTRDQMVGPWQIPVADCAVTSASLDSYYGEAMSLGERAPVALLDFAASARLAVGEALTNIAATQIGELKRIKLSANWMSAAGHPGEDAGLYDAVRAVGEELCPALEITIPVGKDSMSMKTRWQEGHEQREMTSPLSLVITAFARIEDVRRTVTPQLRTDKGDNALLLIDLGAGHNALGATALTQVYRQLGDKPADVRNVQQLAGFFNAMQRLVADQHLLAYHDRSDGGLLVTLAEMAFAGHCGVTVDIQSLGNDALAALFNEELGAVIQVRAEQRADVEKLLADHGLANCVHYLGRAVAGDTFDIRSGTDVVYSEKRSTLRLWWAETSWQMQRLRDNPDCADQEHQAKQDESDPGLNVKLTFDPAEDIAAPFILKQARPKVAVLREQGVNSHVEMAAAFHRAGFDAVDVHMSDLLAGRTDLQSFQTLVACGGFSYGDVLGAGEGWAKSILFNDRVRDEFEAFFHRPTTLALGVCNGCQMMSNLRELIPGAEHWPRFVRNLSDSFEARFSLVEVASSPSLFMQDMVGSRMPIAVSHGEGQVEVRDAAHLAALEQSHLVALRFVNNHGVVTEQYPANPNGSANGITAVTSVSGRATVMMPHPERVFRTVSNSWHPEEWGEDSPWMRMFRNARKQLG.

The tract at residues 304–323 is disordered; it reads WPGAATGSGGEIRDEGATGR. ATP-binding positions include 306–317 and Ala677; that span reads GAATGSGGEIRD. Mg(2+) is bound by residues Asp678, Glu717, Asn721, and Asp885. Ser887 is an ATP binding site. Basic and acidic residues predominate over residues 1000–1013; sequence PDCADQEHQAKQDE. The interval 1000-1019 is disordered; the sequence is PDCADQEHQAKQDESDPGLN. A Glutamine amidotransferase type-1 domain is found at 1043 to 1296; that stretch reads VAVLREQGVN…MFRNARKQLG (254 aa). The active-site Nucleophile is Cys1136. Residues His1261 and Glu1263 contribute to the active site.

In the N-terminal section; belongs to the FGAMS family. In terms of assembly, monomer.

Its subcellular location is the cytoplasm. The enzyme catalyses N(2)-formyl-N(1)-(5-phospho-beta-D-ribosyl)glycinamide + L-glutamine + ATP + H2O = 2-formamido-N(1)-(5-O-phospho-beta-D-ribosyl)acetamidine + L-glutamate + ADP + phosphate + H(+). It participates in purine metabolism; IMP biosynthesis via de novo pathway; 5-amino-1-(5-phospho-D-ribosyl)imidazole from N(2)-formyl-N(1)-(5-phospho-D-ribosyl)glycinamide: step 1/2. Its function is as follows. Phosphoribosylformylglycinamidine synthase involved in the purines biosynthetic pathway. Catalyzes the ATP-dependent conversion of formylglycinamide ribonucleotide (FGAR) and glutamine to yield formylglycinamidine ribonucleotide (FGAM) and glutamate. The chain is Phosphoribosylformylglycinamidine synthase from Yersinia pestis bv. Antiqua (strain Nepal516).